The primary structure comprises 324 residues: Adducin-related protein C1289.14 (324 aa).

This sequence belongs to the aldolase class II family. Adducin subfamily.

The sequence is that of Adducin-related protein C1289.14 from Schizosaccharomyces pombe (strain 972 / ATCC 24843) (Fission yeast).